Reading from the N-terminus, the 115-residue chain is Superoxide reductase (115 aa).

The Fe cation site is built by glutamate 14, histidine 16, histidine 41, histidine 47, cysteine 102, and histidine 105.

Belongs to the desulfoferrodoxin family. Homotetramer. It depends on Fe cation as a cofactor.

The enzyme catalyses reduced [rubredoxin] + superoxide + 2 H(+) = oxidized [rubredoxin] + H2O2. Its function is as follows. Uses electrons from reduced NADP, by way of rubredoxin and an oxidoreductase, to catalyze the reduction of superoxide to hydrogen peroxide. The protein is Superoxide reductase (sorA) of Pyrococcus horikoshii (strain ATCC 700860 / DSM 12428 / JCM 9974 / NBRC 100139 / OT-3).